Consider the following 244-residue polypeptide: Ribonuclease 3 (244 aa).

The region spanning 7 to 134 (FEEVEKTLNI…IIAAIYIDSG (128 aa)) is the RNase III domain. Glu-47 serves as a coordination point for Mg(2+). Residue Asp-51 is part of the active site. Mg(2+) is bound by residues Asn-120 and Glu-123. Glu-123 is an active-site residue. One can recognise a DRBM domain in the interval 161-230 (DYKTNLQEIV…AQDALKKLKS (70 aa)).

The protein belongs to the ribonuclease III family. As to quaternary structure, homodimer. Mg(2+) serves as cofactor.

It is found in the cytoplasm. The catalysed reaction is Endonucleolytic cleavage to 5'-phosphomonoester.. Functionally, digests double-stranded RNA. Involved in the processing of primary rRNA transcript to yield the immediate precursors to the large and small rRNAs (23S and 16S). Processes some mRNAs, and tRNAs when they are encoded in the rRNA operon. Processes pre-crRNA and tracrRNA of type II CRISPR loci if present in the organism. The polypeptide is Ribonuclease 3 (Clostridium kluyveri (strain NBRC 12016)).